The following is a 46-amino-acid chain: Mu-segestritoxin-Sf1d (46 aa).

Cystine bridges form between cysteine 3–cysteine 19, cysteine 10–cysteine 22, cysteine 18–cysteine 42, and cysteine 24–cysteine 40. Residues 31–33 (RPW) form a keys region for toxin activity region.

It belongs to the neurotoxin 16 (SFI) family. In terms of tissue distribution, expressed by the venom gland.

It localises to the secreted. Functionally, insecticidal toxin. It inhibits insect voltage-gated sodium channels (Nav) by partially blocking the channel pore in DUM neurons from the American cockroach, not by acting as a gating modifier. The inhibition is only partially reversible after prolonged washout. In vivo, the toxin causes flaccid paralysis followed by death when injected into Heliothis virescens larvae. It also causes uncoordinated movements followed by full paralysis to sheep blowflies (Lucilia cuprina). When the toxin is fused to snowdrop lectin, it is orally active against larvae of the tomato moth (Laconobia oleracea), the rice brown planthopper (Nilaparvata lugens), and the peach-potato aphid (Myzus persicae). The protein is Mu-segestritoxin-Sf1d of Segestria florentina (Tube-web spider).